We begin with the raw amino-acid sequence, 309 residues long: Taste receptor type 2 member 8 (309 aa).

Over 1 to 7 the chain is Extracellular; it reads MFSPADN. The helical transmembrane segment at 8–28 threads the bilayer; the sequence is IFIILITGEFILGILGNGYIA. Topologically, residues 29 to 50 are cytoplasmic; it reads LVNWIDWIKKKKISTVDYILTN. The helical transmembrane segment at 51-71 threads the bilayer; it reads LVIARICLISVMVVNGIVIVL. Topologically, residues 72 to 82 are extracellular; it reads NPDVYTKNKQQ. Residues 83–103 traverse the membrane as a helical segment; it reads IVIFTFWTFANYLNMWITTCL. The Cytoplasmic portion of the chain corresponds to 104–131; the sequence is NVFYFLKIASSSHPLFLWLKWKIDMVVH. A helical transmembrane segment spans residues 132–152; that stretch reads WILLGCFAISLLVSLIAAIVL. Residues 153 to 184 are Extracellular-facing; the sequence is SCDYRFHAIAKHKRNITEMFXVSKIPYFEPLT. N-linked (GlcNAc...) asparagine glycosylation is present at Asn167. A helical transmembrane segment spans residues 185–205; the sequence is LFNLFAIVPFIVSLISFFLLV. Topologically, residues 206 to 239 are cytoplasmic; the sequence is RSLWRHTKQIKLYATGSRDPSTEVHVRAIKTMTS. A helical membrane pass occupies residues 240-260; the sequence is FIFFFFLYFISSILMTFSYLM. Residues 261-266 lie on the Extracellular side of the membrane; sequence TKYKLA. A helical transmembrane segment spans residues 267-287; that stretch reads VEFGEIAAILYPLGHSLILIV. Over 288–309 the chain is Cytoplasmic; that stretch reads LNNKLRQIFVRMLTCRKIACVI.

The protein belongs to the G-protein coupled receptor T2R family.

It localises to the membrane. Receptor that may play a role in the perception of bitterness and is gustducin-linked. May play a role in sensing the chemical composition of the gastrointestinal content. The activity of this receptor may stimulate alpha gustducin, mediate PLC-beta-2 activation and lead to the gating of TRPM5. The chain is Taste receptor type 2 member 8 (TAS2R8) from Pan troglodytes (Chimpanzee).